Reading from the N-terminus, the 141-residue chain is Aspartate 1-decarboxylase (141 aa).

The active-site Schiff-base intermediate with substrate; via pyruvic acid is the Ser25. Pyruvic acid (Ser) is present on Ser25. Thr57 provides a ligand contact to substrate. The Proton donor role is filled by Tyr58. 73–75 is a substrate binding site; it reads GAA. A disordered region spans residues 121–141; sequence ASAPVPGSRTERSPQAVVAGG.

Belongs to the PanD family. In terms of assembly, heterooctamer of four alpha and four beta subunits. It depends on pyruvate as a cofactor. In terms of processing, is synthesized initially as an inactive proenzyme, which is activated by self-cleavage at a specific serine bond to produce a beta-subunit with a hydroxyl group at its C-terminus and an alpha-subunit with a pyruvoyl group at its N-terminus.

It localises to the cytoplasm. The enzyme catalyses L-aspartate + H(+) = beta-alanine + CO2. Its pathway is cofactor biosynthesis; (R)-pantothenate biosynthesis; beta-alanine from L-aspartate: step 1/1. Catalyzes the pyruvoyl-dependent decarboxylation of aspartate to produce beta-alanine. The polypeptide is Aspartate 1-decarboxylase (Streptomyces griseus subsp. griseus (strain JCM 4626 / CBS 651.72 / NBRC 13350 / KCC S-0626 / ISP 5235)).